Here is a 1321-residue protein sequence, read N- to C-terminus: C-Jun-amino-terminal kinase-interacting protein 4 (1321 aa).

Methionine 1 carries the post-translational modification N-acetylmethionine. In terms of domain architecture, RH1 spans 7–95 (VVYQEEPGGS…ITQYEREKAL (89 aa)). Positions 66–166 (AQDQEHQVEL…NALHQRHTEM (101 aa)) form a coiled coil. Phosphoserine is present on residues serine 109, serine 183, serine 185, serine 194, and serine 203. The interval 203–308 (SLGIFPLPAG…EGFVKGTDTS (106 aa)) is disordered. The residue at position 217 (threonine 217) is a Phosphothreonine. Polar residues predominate over residues 236 to 248 (ELSQPRSHTSLKV). 5 positions are modified to phosphoserine: serine 238, serine 251, serine 265, serine 268, and serine 272. Residues 266-285 (DISQGGSKATTPASTANSDV) show a composition bias toward polar residues. Threonine 292 bears the Phosphothreonine mark. Phosphoserine occurs at positions 311, 329, 332, and 347. A compositionally biased stretch (polar residues) spans 322 to 332 (AQETRNVSTES). Positions 322–341 (AQETRNVSTESGENEEKSEV) are disordered. A phosphothreonine mark is found at threonine 348, threonine 365, and threonine 418. A coiled-coil region spans residues 408 to 534 (REVENLILEN…LQEAVRWTEM (127 aa)). The segment covering 473-489 (LRKARAEAEDARQKAKD) has biased composition (basic and acidic residues). Disordered regions lie at residues 473 to 500 (LRKA…TAQR) and 563 to 600 (SSNA…SQLP). An RH2 domain is found at 500–604 (RKRFTRVEMA…TLSQLPGDKS (105 aa)). Position 586 is a phosphothreonine (threonine 586). Position 588 is a phosphoserine (serine 588). Phosphothreonine is present on threonine 595. Serine 705, serine 728, serine 730, serine 732, and serine 733 each carry phosphoserine. Positions 724-758 (SKQRSASQSSLDKLDQELKEQQKEFKNQEELSSQV) form a coiled coil. Residues 853-883 (TGAATSPSTNGASPVIEKPPEMETENSEVDE) are disordered. The span at 855–864 (AATSPSTNGA) shows a compositional bias: polar residues. The span at 874–883 (METENSEVDE) shows a compositional bias: acidic residues. Phosphoserine is present on serine 1188. Residues 1239–1267 (PQSSSGGADLTADKAGSSAQEPSSQTPLK) form a disordered region. Residues 1255-1266 (SSAQEPSSQTPL) are compositionally biased toward polar residues. Position 1264 is a phosphothreonine (threonine 1264).

The protein belongs to the JIP scaffold family. Homodimer. The homodimer interacts with ARF6, forming a heterotetramer. Homooligomer. Interacts with MAX, MAPK8, MAPK14, MAP3K3, MYC, and MAP2K4. Interacts with KNS2. Interaction with KNS2 is important in the formation of ternary complex with MAPK8. Interacts with PIP4P1. Interacts with PIKFYVE. Phosphorylated by MAPK8 and MAPK14. In terms of tissue distribution, highly expressed in brain, kidney, liver, heart.

The protein localises to the cytoplasm. It is found in the perinuclear region. The protein resides in the lysosome membrane. Its function is as follows. The JNK-interacting protein (JIP) group of scaffold proteins selectively mediates JNK signaling by aggregating specific components of the MAPK cascade to form a functional JNK signaling module. Regulates lysosomal positioning by acting as an adapter protein which links PIP4P1-positive lysosomes to the dynein-dynactin complex. Assists PIKFYVE selective functionality in microtubule-based endosome-to-TGN trafficking. The chain is C-Jun-amino-terminal kinase-interacting protein 4 from Mus musculus (Mouse).